The sequence spans 465 residues: Adenosylhomocysteinase (465 aa).

Residues T56, D131, and E191 each contribute to the substrate site. 192 to 194 (TTT) is an NAD(+) binding site. The substrate site is built by K221 and D225. NAD(+) is bound by residues N226, 255–260 (GYGDVG), E278, N313, 334–336 (IGH), and N379.

This sequence belongs to the adenosylhomocysteinase family. The cofactor is NAD(+).

The protein localises to the cytoplasm. It catalyses the reaction S-adenosyl-L-homocysteine + H2O = L-homocysteine + adenosine. Its pathway is amino-acid biosynthesis; L-homocysteine biosynthesis; L-homocysteine from S-adenosyl-L-homocysteine: step 1/1. Functionally, may play a key role in the regulation of the intracellular concentration of adenosylhomocysteine. This Bartonella henselae (strain ATCC 49882 / DSM 28221 / CCUG 30454 / Houston 1) (Rochalimaea henselae) protein is Adenosylhomocysteinase.